Here is a 474-residue protein sequence, read N- to C-terminus: Na(+)/H(+) antiporter NhaA 3 (474 aa).

11 consecutive transmembrane segments (helical) span residues 31–51 (VGGVLLLVAAIAALVWANIPA), 73–93 (LSVAHWAADGLLAIFFFVAGI), 110–130 (AALPVVAALCGMVVPAVVYTV), 141–161 (GWAVPTATDIAFALAVLAVIG), 171–191 (FLLTLAVVDDLFAILIIAVFF), 194–214 (TLNFAALGGAVVGLAVFWLLL), 220–240 (GWYVYVPLGLVIWALMYNSGV), 280–300 (LAVPLFALFSAGVAITGGALA), 309–329 (LGVVLGLVVGKTLGIFGGTWL), 347–367 (VFAVATLAGIGFTVSLLIGEL), and 378–398 (EVKAAVLTGSLIAAALATVLL).

This sequence belongs to the NhaA Na(+)/H(+) (TC 2.A.33) antiporter family.

It localises to the cell membrane. The enzyme catalyses Na(+)(in) + 2 H(+)(out) = Na(+)(out) + 2 H(+)(in). Functionally, na(+)/H(+) antiporter that extrudes sodium in exchange for external protons. The polypeptide is Na(+)/H(+) antiporter NhaA 3 (Streptomyces coelicolor (strain ATCC BAA-471 / A3(2) / M145)).